Here is a 260-residue protein sequence, read N- to C-terminus: Ribonuclease PH (260 aa).

Residues Arg88 and 126–128 each bind phosphate; that span reads GTR.

Belongs to the RNase PH family. In terms of assembly, homohexameric ring arranged as a trimer of dimers.

The catalysed reaction is tRNA(n+1) + phosphate = tRNA(n) + a ribonucleoside 5'-diphosphate. In terms of biological role, phosphorolytic 3'-5' exoribonuclease that plays an important role in tRNA 3'-end maturation. Removes nucleotide residues following the 3'-CCA terminus of tRNAs; can also add nucleotides to the ends of RNA molecules by using nucleoside diphosphates as substrates, but this may not be physiologically important. Probably plays a role in initiation of 16S rRNA degradation (leading to ribosome degradation) during starvation. This Mycolicibacterium gilvum (strain PYR-GCK) (Mycobacterium gilvum (strain PYR-GCK)) protein is Ribonuclease PH.